Consider the following 528-residue polypeptide: Aurora kinase (528 aa).

Disordered regions lie at residues 1-35 (MMLP…SLFQ) and 48-235 (ISKP…KPQQ). Composition is skewed to low complexity over residues 18–29 (NNNNSNNNNNNN) and 59–94 (HSHT…PNLN). Positions 95 to 104 (TSLVFTPTKN) are enriched in polar residues. The span at 105 to 120 (SSSSSSSHSSSLLSSS) shows a compositional bias: low complexity. A compositionally biased stretch (polar residues) spans 129-155 (QPESNHTRATSHYRTTSTSQYKSSANK). A compositionally biased stretch (low complexity) spans 185–230 (TTTATQNTNNNKILNPSLSSSTIRFSTVSSSTSSSTTSSSSSSHTS). Residues 242-515 (FEFGKILGKG…LKEVLNHNWI (274 aa)) enclose the Protein kinase domain. Residues 248 to 256 (LGKGKLGRV) and Lys271 each bind ATP. Asp365 (proton acceptor) is an active-site residue.

Belongs to the protein kinase superfamily. Ser/Thr protein kinase family. Aurora subfamily.

The protein localises to the nucleus. It localises to the cytoplasm. The protein resides in the cytoskeleton. Its subcellular location is the spindle. It is found in the chromosome. The protein localises to the centromere. It localises to the kinetochore. The enzyme catalyses L-seryl-[protein] + ATP = O-phospho-L-seryl-[protein] + ADP + H(+). It catalyses the reaction L-threonyl-[protein] + ATP = O-phospho-L-threonyl-[protein] + ADP + H(+). Its function is as follows. Component of the chromosomal passenger complex (CPC), a complex that acts as a key regulator of chromosome segregation and cytokinesis. Has a role in error-correction of aberrent kinetochore-microtubule attachments to ensure that sister kinetochores become bioriented and connect to opposite poles by promoting spindle assembly checkpoint signaling. This chain is Aurora kinase (IPL1), found in Candida albicans (strain SC5314 / ATCC MYA-2876) (Yeast).